Reading from the N-terminus, the 593-residue chain is MAASRSELLRPAFGEPSPSLGPFVVNPHTCSYRWWQKFLIVLVLYTAWASPFELAMEKSASAALAVTELVVDAFFAVDIAVSFFVAYRDASTGLLVTDRKKIATRHLARPCLALDVASTIPLQMIYRIVSGKRQALYGLLNLLRLWRLRRVSKLFARLEKDIRFSYLWTRLIKLLYVTLFAVHFASCIYLWMAFHHKAKELTWIGSQFHGFEDRSVWFCYTCAVYWSITTLATVGYGDLHAANTGEMLFSIAFMLFNMGLTSYIIGNITNLVVHETTNTFKMRDMVQRTSVFGRTNRLPVAMREQMMESLQLRFRAEEQLQQEMLSELPKAVRSGIAQHMFRGAVQSCYLFQGVSDKLVLPLVAEMKAESFPPKADIILENEASTDCYIIVSGEVEVLTTLEDGTEKQVMRIGPRGMAGEIGVMFNIPQPFTIRSRKLTQLVRISHSHMVSTIRPNTADGVVVFSNFVLYLESLKVKAKETAFVRDHLRNGYSTVLGSATMFDVDESKESAHKMLPCKEPKRVSIHEHLLNGTGTALNGSSGKLVILPDSMQDLMKLSEKKFGKAARGILTVGGAEVEDIEVIRDGDHLFFSW.

Over 1–33 (MAASRSELLRPAFGEPSPSLGPFVVNPHTCSYR) the chain is Cytoplasmic. The chain crosses the membrane as a helical span at residues 34–54 (WWQKFLIVLVLYTAWASPFEL). Residues 55–64 (AMEKSASAAL) are Extracellular-facing. The helical transmembrane segment at 65-85 (AVTELVVDAFFAVDIAVSFFV) threads the bilayer. Residues 86–106 (AYRDASTGLLVTDRKKIATRH) lie on the Cytoplasmic side of the membrane. The helical transmembrane segment at 107-129 (LARPCLALDVASTIPLQMIYRIV) threads the bilayer. Topologically, residues 130–138 (SGKRQALYG) are extracellular. A helical; Voltage-sensor membrane pass occupies residues 139–159 (LLNLLRLWRLRRVSKLFARLE). The Cytoplasmic portion of the chain corresponds to 160–173 (KDIRFSYLWTRLIK). The chain crosses the membrane as a helical span at residues 174-194 (LLYVTLFAVHFASCIYLWMAF). Over 195–221 (HHKAKELTWIGSQFHGFEDRSVWFCYT) the chain is Extracellular. The pore-forming intramembrane region spans 222-241 (CAVYWSITTLATVGYGDLHA). The Extracellular portion of the chain corresponds to 242 to 247 (ANTGEM). Residues 248–268 (LFSIAFMLFNMGLTSYIIGNI) form a helical membrane-spanning segment. The Cytoplasmic segment spans residues 269 to 593 (TNLVVHETTN…RDGDHLFFSW (325 aa)). 350–470 (LFQGVSDKLV…VVVFSNFVLY (121 aa)) is an a nucleoside 3',5'-cyclic phosphate binding site. The region spanning 522 to 593 (RVSIHEHLLN…RDGDHLFFSW (72 aa)) is the KHA domain.

This sequence belongs to the potassium channel family. Plant (TC 1.A.1.4) subfamily.

It is found in the membrane. In terms of biological role, probable inward-rectifying potassium channel. Assuming opened or closed conformations in response to the voltage difference across the membrane, the channel is activated by hyperpolarization. The protein is Potassium channel KAT6 of Oryza sativa subsp. japonica (Rice).